The following is a 455-amino-acid chain: Putative O-acetyltransferase SAT14 (455 aa).

It belongs to the lysine N-acyltransferase MbtK family.

The protein operates within mycotoxin biosynthesis. Functionally, putative O-acetyltransferase; part of the satratoxin SC2 cluster involved in the biosynthesis of satratoxins, trichothecene mycotoxins that are associated with human food poisonings. Satratoxins are suggested to be made by products of multiple gene clusters (SC1, SC2 and SC3) that encode 21 proteins in all, including polyketide synthases, acetyltransferases, and other enzymes expected to modify the trichothecene skeleton. SC1 encodes 10 proteins, SAT1 to SAT10. The largest are SAT8, which encodes a putative polyketide synthase (PKS) with a conventional non-reducing architecture, and SAT10, a putative protein containing four ankyrin repeats and thus may be involved in protein scaffolding. The putative short-chain reductase SAT3 may assist the PKS in some capacity. SAT6 contains a secretory lipase domain and acts probably as a trichothecene esterase. SAT5 encodes a putative acetyltransferase, and so, with SAT6, may affect endogenous protection from toxicity. The probable transcription factor SAT9 may regulate the expression of the SC1 cluster. SC2 encodes proteins SAT11 to SAT16, the largest of which encodes the putative reducing PKS SAT13. SAT11 is a cytochrome P450 monooxygenase, while SAT14 and SAT16 are probable acetyltransferases. The SC2 cluster may be regulated by the transcription factor SAT15. SC3 is a small cluster that encodes 5 proteins, SAT17 to SAT21. SAT21 is a putative MFS-type transporter which may have a role in exporting secondary metabolites. The four other proteins putatively encoded in SC3 include the taurine hydroxylase-like protein SAT17, the O-methyltransferase SAT18, the acetyltransferase SAT19, and the Cys6-type zinc finger SAT20, the latter being probably involved in regulation of SC3 expression. The chain is Putative O-acetyltransferase SAT14 from Stachybotrys chartarum (strain CBS 109288 / IBT 7711) (Toxic black mold).